Here is a 67-residue protein sequence, read N- to C-terminus: ATP synthase protein 8 (67 aa).

The chain crosses the membrane as a helical span at residues threonine 8–phenylalanine 24. Lysine 54 carries the N6-acetyllysine; alternate modification. The residue at position 54 (lysine 54) is an N6-succinyllysine; alternate. Lysine 57 is subject to N6-acetyllysine.

The protein belongs to the ATPase protein 8 family. As to quaternary structure, F-type ATPases have 2 components, CF(1) - the catalytic core - and CF(0) - the membrane proton channel. Component of an ATP synthase complex composed of ATP5PB, ATP5MC1, ATP5F1E, ATP5PD, ATP5ME, ATP5PF, ATP5MF, MT-ATP6, MT-ATP8, ATP5F1A, ATP5F1B, ATP5F1D, ATP5F1C, ATP5PO, ATP5MG, ATP5MK and ATP5MJ. Interacts with PRICKLE3.

It localises to the mitochondrion membrane. Mitochondrial membrane ATP synthase (F(1)F(0) ATP synthase or Complex V) produces ATP from ADP in the presence of a proton gradient across the membrane which is generated by electron transport complexes of the respiratory chain. F-type ATPases consist of two structural domains, F(1) - containing the extramembraneous catalytic core and F(0) - containing the membrane proton channel, linked together by a central stalk and a peripheral stalk. During catalysis, ATP synthesis in the catalytic domain of F(1) is coupled via a rotary mechanism of the central stalk subunits to proton translocation. Part of the complex F(0) domain. Minor subunit located with subunit a in the membrane. The chain is ATP synthase protein 8 (MT-ATP8) from Felis silvestris lybica (African wildcat).